The following is a 388-amino-acid chain: Lipid-A-disaccharide synthase (388 aa).

It belongs to the LpxB family.

The enzyme catalyses a lipid X + a UDP-2-N,3-O-bis[(3R)-3-hydroxyacyl]-alpha-D-glucosamine = a lipid A disaccharide + UDP + H(+). It participates in bacterial outer membrane biogenesis; LPS lipid A biosynthesis. Functionally, condensation of UDP-2,3-diacylglucosamine and 2,3-diacylglucosamine-1-phosphate to form lipid A disaccharide, a precursor of lipid A, a phosphorylated glycolipid that anchors the lipopolysaccharide to the outer membrane of the cell. The polypeptide is Lipid-A-disaccharide synthase (Burkholderia thailandensis (strain ATCC 700388 / DSM 13276 / CCUG 48851 / CIP 106301 / E264)).